The following is a 340-amino-acid chain: tRNA N6-adenosine threonylcarbamoyltransferase (340 aa).

Fe cation is bound by residues histidine 111 and histidine 115. Substrate is bound by residues 134–138 (LVSGG), aspartate 167, glycine 180, and asparagine 276. Aspartate 304 contacts Fe cation.

Belongs to the KAE1 / TsaD family. Fe(2+) is required as a cofactor.

The protein resides in the cytoplasm. It catalyses the reaction L-threonylcarbamoyladenylate + adenosine(37) in tRNA = N(6)-L-threonylcarbamoyladenosine(37) in tRNA + AMP + H(+). In terms of biological role, required for the formation of a threonylcarbamoyl group on adenosine at position 37 (t(6)A37) in tRNAs that read codons beginning with adenine. Is involved in the transfer of the threonylcarbamoyl moiety of threonylcarbamoyl-AMP (TC-AMP) to the N6 group of A37, together with TsaE and TsaB. TsaD likely plays a direct catalytic role in this reaction. The chain is tRNA N6-adenosine threonylcarbamoyltransferase from Helicobacter pylori (strain Shi470).